Consider the following 250-residue polypeptide: Indole-3-glycerol phosphate synthase (250 aa).

The protein belongs to the TrpC family.

It carries out the reaction 1-(2-carboxyphenylamino)-1-deoxy-D-ribulose 5-phosphate + H(+) = (1S,2R)-1-C-(indol-3-yl)glycerol 3-phosphate + CO2 + H2O. It functions in the pathway amino-acid biosynthesis; L-tryptophan biosynthesis; L-tryptophan from chorismate: step 4/5. The chain is Indole-3-glycerol phosphate synthase from Metallosphaera sedula (strain ATCC 51363 / DSM 5348 / JCM 9185 / NBRC 15509 / TH2).